A 380-amino-acid chain; its full sequence is Phosphate acyltransferase (380 aa).

The disordered stretch occupies residues 1–23 (MPSPPPTPETATASDRTATPAPG).

This sequence belongs to the PlsX family. As to quaternary structure, homodimer. Probably interacts with PlsY.

The protein localises to the cytoplasm. The enzyme catalyses a fatty acyl-[ACP] + phosphate = an acyl phosphate + holo-[ACP]. It participates in lipid metabolism; phospholipid metabolism. Catalyzes the reversible formation of acyl-phosphate (acyl-PO(4)) from acyl-[acyl-carrier-protein] (acyl-ACP). This enzyme utilizes acyl-ACP as fatty acyl donor, but not acyl-CoA. The chain is Phosphate acyltransferase from Acidiphilium cryptum (strain JF-5).